We begin with the raw amino-acid sequence, 57 residues long: Large ribosomal subunit protein bL32 (57 aa).

The disordered stretch occupies residues 1 to 20; sequence MAVQQRRSSKHRRDKRRSHD. Residues 7-18 show a composition bias toward basic residues; that stretch reads RSSKHRRDKRRS.

The protein belongs to the bacterial ribosomal protein bL32 family.

The protein is Large ribosomal subunit protein bL32 (rpmF) of Mycoplasma genitalium (strain ATCC 33530 / DSM 19775 / NCTC 10195 / G37) (Mycoplasmoides genitalium).